The chain runs to 796 residues: Vacuolar protein sorting-associated protein 35 (796 aa).

A Phosphoserine modification is found at Ser7. Interaction with SNX3 regions lie at residues 25–44 and 205–215; these read VQSF…DALK and DREKRERERQE. An interaction with SLC11A2 region spans residues 438-796; sequence CYVLSNVLDY…EGPIYEGLIL (359 aa). Residues 500-693 are interaction with IGF2R cytoplasmic domain; it reads SEDPDQQYLI…DKNGEELHGG (194 aa). Position 783 is a phosphoserine (Ser783). Tyr791 is subject to Phosphotyrosine.

It belongs to the VPS35 family. Component of the heterotrimeric retromer cargo-selective complex (CSC), also decribed as vacuolar protein sorting subcomplex (VPS), formed by VPS26 (VPS26A or VPS26B), VPS29 and VPS35. The CSC has a highly elongated structure with VPS26 and VPS29 binding independently at opposite distal ends of VPS35 as central platform. The CSC is believed to associate with variable sorting nexins to form functionally distinct retromer complex variants. The originally described retromer complex (also called SNX-BAR retromer) is a pentamer containing the CSC and a heterodimeric membrane-deforming subcomplex formed between SNX1 or SNX2 and SNX5 or SNX6 (also called SNX-BAR subcomplex); the respective CSC and SNX-BAR subcomplexes associate with low affinity. The CSC associates with SNX3 to form a SNX3-retromer complex. The CSC associates with SNX27, the WASH complex and the SNX-BAR subcomplex to form the SNX27-retromer complex. Interacts with VPS26A, VPS26B, VPS29, SNX1, SNX2, IGF2R, SNX3, GOLPH3, LRRK2, SLC11A2, WASHC2A, WASHC2C, FKBP15, WASHC1, RAB7A, SNX27, WASHC5, EHD1. Interacts with MAGEL2; leading to recruitment of the TRIM27:MAGEL2 E3 ubiquitin ligase complex retromer-containing endosomes. Interacts with SORCS2. As to quaternary structure, (Microbial infection) Interacts with human papillomavirus 16 minor capsid protein L2 (via C-terminus); this interaction mediates the transport of the capsid from the early endosome to the Golgi apparatus. As to expression, ubiquitous. Highly expressed in heart, brain, placenta, skeletal muscle, spleen, thymus, testis, ovary, small intestine, kidney and colon.

Its subcellular location is the cytoplasm. The protein resides in the membrane. It localises to the endosome. It is found in the early endosome. The protein localises to the late endosome. Acts as a component of the retromer cargo-selective complex (CSC). The CSC is believed to be the core functional component of retromer or respective retromer complex variants acting to prevent missorting of selected transmembrane cargo proteins into the lysosomal degradation pathway. The recruitment of the CSC to the endosomal membrane involves RAB7A and SNX3. The CSC seems to associate with the cytoplasmic domain of cargo proteins predominantly via VPS35; however, these interactions seem to be of low affinity and retromer SNX proteins may also contribute to cargo selectivity thus questioning the classical function of the CSC. The SNX-BAR retromer mediates retrograde transport of cargo proteins from endosomes to the trans-Golgi network (TGN) and is involved in endosome-to-plasma membrane transport for cargo protein recycling. The SNX3-retromer mediates the retrograde endosome-to-TGN transport of WLS distinct from the SNX-BAR retromer pathway. The SNX27-retromer is believed to be involved in endosome-to-plasma membrane trafficking and recycling of a broad spectrum of cargo proteins. The CSC seems to act as recruitment hub for other proteins, such as the WASH complex and TBC1D5. Required for retrograde transport of lysosomal enzyme receptor IGF2R and SLC11A2. Required to regulate transcytosis of the polymeric immunoglobulin receptor (pIgR-pIgA). Required for endosomal localization of WASHC2C. Mediates the association of the CSC with the WASH complex via WASHC2. Required for the endosomal localization of TBC1D5. In terms of biological role, (Microbial infection) The heterotrimeric retromer cargo-selective complex (CSC) mediates the exit of human papillomavirus from the early endosome and the delivery to the Golgi apparatus. In Homo sapiens (Human), this protein is Vacuolar protein sorting-associated protein 35.